Reading from the N-terminus, the 156-residue chain is Ribosome maturation factor RimP (156 aa).

The protein belongs to the RimP family.

It is found in the cytoplasm. Its function is as follows. Required for maturation of 30S ribosomal subunits. In Oenococcus oeni (strain ATCC BAA-331 / PSU-1), this protein is Ribosome maturation factor RimP.